An 87-amino-acid chain; its full sequence is Small ribosomal subunit protein bS20 (87 aa).

The protein belongs to the bacterial ribosomal protein bS20 family.

Binds directly to 16S ribosomal RNA. The polypeptide is Small ribosomal subunit protein bS20 (Clostridium beijerinckii (strain ATCC 51743 / NCIMB 8052) (Clostridium acetobutylicum)).